The sequence spans 310 residues: tRNA-cytidine(32) 2-sulfurtransferase (310 aa).

Residues 58 to 63 carry the PP-loop motif motif; the sequence is SGGKDS. Cysteine 133, cysteine 136, and cysteine 224 together coordinate [4Fe-4S] cluster.

This sequence belongs to the TtcA family. As to quaternary structure, homodimer. Mg(2+) serves as cofactor. [4Fe-4S] cluster is required as a cofactor.

It localises to the cytoplasm. The catalysed reaction is cytidine(32) in tRNA + S-sulfanyl-L-cysteinyl-[cysteine desulfurase] + AH2 + ATP = 2-thiocytidine(32) in tRNA + L-cysteinyl-[cysteine desulfurase] + A + AMP + diphosphate + H(+). Its pathway is tRNA modification. Functionally, catalyzes the ATP-dependent 2-thiolation of cytidine in position 32 of tRNA, to form 2-thiocytidine (s(2)C32). The sulfur atoms are provided by the cysteine/cysteine desulfurase (IscS) system. This is tRNA-cytidine(32) 2-sulfurtransferase from Paracidovorax citrulli (strain AAC00-1) (Acidovorax citrulli).